The chain runs to 203 residues: Protein shisa-like-1a (203 aa).

The first 25 residues, 1–25 (MIMNGRWSFNTLAIIFILLSTAALS), serve as a signal peptide directing secretion. Residues 26–97 (AHFRVCEPYS…SDSFAHNNYT (72 aa)) lie on the Extracellular side of the membrane. 5 N-linked (GlcNAc...) asparagine glycosylation sites follow: Asn-53, Asn-63, Asn-72, Asn-83, and Asn-95. The chain crosses the membrane as a helical span at residues 98 to 118 (ALIGVWIYGFFVMVLLALDFL). Residues 119–203 (YYSAMNYELC…LLSFQTSTAW (85 aa)) are Cytoplasmic-facing. A disordered region spans residues 157 to 191 (ELNTGPGLSQQQQLHLHHHHHHHHPRHSLRGDTQS). Low complexity predominate over residues 161–170 (GPGLSQQQQL). Over residues 171-184 (HLHHHHHHHHPRHS) the composition is skewed to basic residues.

The protein belongs to the shisa family.

Its subcellular location is the membrane. The sequence is that of Protein shisa-like-1a (shisal1a) from Danio rerio (Zebrafish).